The following is a 668-amino-acid chain: Kinesin-like protein KIF2B (668 aa).

Thr125 is subject to Phosphothreonine; by PLK1. A coiled-coil region spans residues 149 to 177 (CLREIEKLQKQREKRRRLQLEIRARRALD). The residue at position 204 (Ser204) is a Phosphoserine; by PLK1. The region spanning 213 to 543 (RICVCVRKRP…LRYANRVKEL (331 aa)) is the Kinesin motor domain. 303–310 (GQTGSGKT) provides a ligand contact to ATP. A compositionally biased stretch (basic and acidic residues) spans 585–604 (PTVEKEEEKESDELTSKKEP). Positions 585–605 (PTVEKEEEKESDELTSKKEPA) are disordered. The stretch at 646 to 667 (VLTDIQKKLQSLREDLQKKSQV) forms a coiled coil.

Belongs to the TRAFAC class myosin-kinesin ATPase superfamily. Kinesin family. MCAK/KIF2 subfamily. In terms of processing, phosphorylation at Thr-125 by PLK1 is required for activity in the correction of kinetochore-microtubules attachment errors, while phosphorylation at Ser-204 also by PLK1 is required for the kinetochore localization and activity in prometaphase.

It localises to the cytoplasm. The protein localises to the cytoskeleton. The protein resides in the microtubule organizing center. It is found in the centrosome. Its subcellular location is the spindle. It localises to the chromosome. The protein localises to the centromere. The protein resides in the kinetochore. Plus end-directed microtubule-dependent motor required for spindle assembly and chromosome movement during mitosis. Has microtubule depolymerization activity. Plays a role in chromosome congression. The polypeptide is Kinesin-like protein KIF2B (Kif2b) (Mus musculus (Mouse)).